We begin with the raw amino-acid sequence, 232 residues long: UPF0758 protein BH3032 (232 aa).

The 123-residue stretch at 107–229 (VIRTPEDVSR…FVSLKEKGHL (123 aa)) folds into the MPN domain. H178, H180, and D191 together coordinate Zn(2+). The JAMM motif signature appears at 178-191 (HNHPSGDPTPSRED).

It belongs to the UPF0758 family.

The polypeptide is UPF0758 protein BH3032 (Halalkalibacterium halodurans (strain ATCC BAA-125 / DSM 18197 / FERM 7344 / JCM 9153 / C-125) (Bacillus halodurans)).